Consider the following 177-residue polypeptide: Adenine phosphoribosyltransferase (177 aa).

The protein belongs to the purine/pyrimidine phosphoribosyltransferase family. As to quaternary structure, homodimer.

It localises to the cytoplasm. The enzyme catalyses AMP + diphosphate = 5-phospho-alpha-D-ribose 1-diphosphate + adenine. It functions in the pathway purine metabolism; AMP biosynthesis via salvage pathway; AMP from adenine: step 1/1. Catalyzes a salvage reaction resulting in the formation of AMP, that is energically less costly than de novo synthesis. The protein is Adenine phosphoribosyltransferase of Chlorobium luteolum (strain DSM 273 / BCRC 81028 / 2530) (Pelodictyon luteolum).